We begin with the raw amino-acid sequence, 454 residues long: Trichosetin biosynthesis cluster transcription factor TF22 (454 aa).

Positions 13-47 form a DNA-binding region, zn(2)-C6 fungal-type; the sequence is CDRCRSHKLKCTVSPEDSRSGPHKCTRCIRAQVTC. The interval 51–89 is disordered; it reads PRSQSKRTPNGKNKPEKPKPELEPPQKTSPPVCSSSLAG. The span at 52–61 shows a compositional bias: polar residues; it reads RSQSKRTPNG. Residues 63–74 show a composition bias toward basic and acidic residues; it reads NKPEKPKPELEP.

The protein localises to the nucleus. Functionally, transcription factor that regulates the expression of the gene cluster that mediates the biosynthesis of trichosetin, a trans-fused decalin-containing tetramic acid with antimicrobial activity. Directly activates expression of only the three biosynthetic genes PKS-NRPS1, DA and ER, while TF23 and MFS-T are induced by the final product trichosetin and not by TF22. The polypeptide is Trichosetin biosynthesis cluster transcription factor TF22 (Gibberella fujikuroi (strain CBS 195.34 / IMI 58289 / NRRL A-6831) (Bakanae and foot rot disease fungus)).